Consider the following 371-residue polypeptide: Isopentenyl-diphosphate delta-isomerase (371 aa).

9 to 10 (RK) serves as a coordination point for substrate. Residues threonine 66, 67–69 (GMT), serine 100, and asparagine 128 contribute to the FMN site. 100 to 102 (SQR) provides a ligand contact to substrate. Glutamine 167 contributes to the substrate binding site. Residue glutamate 168 participates in Mg(2+) binding. FMN contacts are provided by residues lysine 199, serine 224, threonine 229, 278 to 280 (GMR), and 299 to 300 (AL).

It belongs to the IPP isomerase type 2 family. Homooctamer. Dimer of tetramers. The cofactor is FMN. NADPH is required as a cofactor. It depends on Mg(2+) as a cofactor.

The protein localises to the cytoplasm. It carries out the reaction isopentenyl diphosphate = dimethylallyl diphosphate. Involved in the biosynthesis of isoprenoids. Catalyzes the 1,3-allylic rearrangement of the homoallylic substrate isopentenyl (IPP) to its allylic isomer, dimethylallyl diphosphate (DMAPP). The chain is Isopentenyl-diphosphate delta-isomerase from Pyrococcus horikoshii (strain ATCC 700860 / DSM 12428 / JCM 9974 / NBRC 100139 / OT-3).